A 182-amino-acid polypeptide reads, in one-letter code: Adenine phosphoribosyltransferase (182 aa).

This sequence belongs to the purine/pyrimidine phosphoribosyltransferase family. In terms of assembly, homodimer.

It is found in the cytoplasm. It catalyses the reaction AMP + diphosphate = 5-phospho-alpha-D-ribose 1-diphosphate + adenine. Its pathway is purine metabolism; AMP biosynthesis via salvage pathway; AMP from adenine: step 1/1. Its function is as follows. Catalyzes a salvage reaction resulting in the formation of AMP, that is energically less costly than de novo synthesis. The chain is Adenine phosphoribosyltransferase from Campylobacter fetus subsp. fetus (strain 82-40).